The following is a 495-amino-acid chain: Glutamyl-tRNA(Gln) amidotransferase subunit A (495 aa).

Active-site charge relay system residues include Lys-75 and Ser-150. Ser-174 (acyl-ester intermediate) is an active-site residue.

It belongs to the amidase family. GatA subfamily. As to quaternary structure, heterotrimer of A, B and C subunits.

The catalysed reaction is L-glutamyl-tRNA(Gln) + L-glutamine + ATP + H2O = L-glutaminyl-tRNA(Gln) + L-glutamate + ADP + phosphate + H(+). Allows the formation of correctly charged Gln-tRNA(Gln) through the transamidation of misacylated Glu-tRNA(Gln) in organisms which lack glutaminyl-tRNA synthetase. The reaction takes place in the presence of glutamine and ATP through an activated gamma-phospho-Glu-tRNA(Gln). In Ralstonia nicotianae (strain ATCC BAA-1114 / GMI1000) (Ralstonia solanacearum), this protein is Glutamyl-tRNA(Gln) amidotransferase subunit A.